The primary structure comprises 804 residues: Elongation factor G, mitochondrial (804 aa).

The transit peptide at 1-63 (MSMHRVARAV…RHFFQSPIIR (63 aa)) directs the protein to the mitochondrion. In terms of domain architecture, tr-type G spans 99–385 (RRVRNIGIAA…AVCDYLPNPA (287 aa)). GTP contacts are provided by residues 108 to 115 (AHIDSGKT), 183 to 187 (DTPGH), and 237 to 240 (NKMD).

The protein belongs to the TRAFAC class translation factor GTPase superfamily. Classic translation factor GTPase family. EF-G/EF-2 subfamily.

Its subcellular location is the mitochondrion. It functions in the pathway protein biosynthesis; polypeptide chain elongation. Mitochondrial GTPase that catalyzes the GTP-dependent ribosomal translocation step during translation elongation. During this step, the ribosome changes from the pre-translocational (PRE) to the post-translocational (POST) state as the newly formed A-site-bound peptidyl-tRNA and P-site-bound deacylated tRNA move to the P and E sites, respectively. Catalyzes the coordinated movement of the two tRNA molecules, the mRNA and conformational changes in the ribosome. The chain is Elongation factor G, mitochondrial (mef1) from Sclerotinia sclerotiorum (strain ATCC 18683 / 1980 / Ss-1) (White mold).